The primary structure comprises 338 residues: Thiosulfate-binding protein (338 aa).

The signal sequence occupies residues 1–25; the sequence is MAVNLLKKNSLALVASLLLAGHVQA.

It belongs to the prokaryotic sulfate-binding protein family. In terms of assembly, the complex is composed of two ATP-binding proteins (CysA), two transmembrane proteins (CysT and CysW) and a solute-binding protein (CysP).

It is found in the periplasm. Functionally, part of the ABC transporter complex CysAWTP (TC 3.A.1.6.1) involved in sulfate/thiosulfate import. This protein specifically binds thiosulfate and is involved in its transmembrane transport. The sequence is that of Thiosulfate-binding protein (cysP) from Escherichia coli (strain K12).